The following is an 81-amino-acid chain: Photosystem I iron-sulfur center (81 aa).

2 4Fe-4S ferredoxin-type domains span residues 2-31 (VHVV…MVPW) and 39-68 (IASS…IRVY). [4Fe-4S] cluster contacts are provided by Cys11, Cys14, Cys17, Cys21, Cys48, Cys51, Cys54, and Cys58.

As to quaternary structure, the eukaryotic PSI reaction center is composed of at least 11 subunits. The cofactor is [4Fe-4S] cluster.

The protein resides in the plastid. The protein localises to the chloroplast thylakoid membrane. The enzyme catalyses reduced [plastocyanin] + hnu + oxidized [2Fe-2S]-[ferredoxin] = oxidized [plastocyanin] + reduced [2Fe-2S]-[ferredoxin]. Apoprotein for the two 4Fe-4S centers FA and FB of photosystem I (PSI); essential for photochemical activity. FB is the terminal electron acceptor of PSI, donating electrons to ferredoxin. The C-terminus interacts with PsaA/B/D and helps assemble the protein into the PSI complex. Required for binding of PsaD and PsaE to PSI. PSI is a plastocyanin/cytochrome c6-ferredoxin oxidoreductase, converting photonic excitation into a charge separation, which transfers an electron from the donor P700 chlorophyll pair to the spectroscopically characterized acceptors A0, A1, FX, FA and FB in turn. The chain is Photosystem I iron-sulfur center from Cyanidium caldarium (Red alga).